A 410-amino-acid chain; its full sequence is Killer cell immunoglobulin-like receptor 3DL3 (410 aa).

Positions Met-1 to Gly-25 are cleaved as a signal peptide. Residues Gln-26–Leu-322 lie on the Extracellular side of the membrane. 3 consecutive Ig-like C2-type domains span residues Gly-42 to Ser-97, Gly-137 to Gly-197, and Gly-237 to Gly-295. Cystine bridges form between Cys-49–Cys-95 and Cys-144–Cys-195. Asn-179, Asn-239, and Asn-273 each carry an N-linked (GlcNAc...) asparagine glycan. The cysteines at positions 244 and 293 are disulfide-linked. A helical membrane pass occupies residues His-323 to Leu-343. At His-344–Val-410 the chain is on the cytoplasmic side.

The protein belongs to the immunoglobulin superfamily.

Its subcellular location is the cell membrane. In terms of biological role, receptor on natural killer cells. May inhibit the activity of NK cells thus preventing cell lysis. The sequence is that of Killer cell immunoglobulin-like receptor 3DL3 (KIR3DL3) from Homo sapiens (Human).